The primary structure comprises 326 residues: ATP synthase subunit gamma, mitochondrial (326 aa).

The N-terminal 45 residues, 1 to 45, are a transit peptide targeting the mitochondrion; the sequence is MAMAALRREGRRLAAAPFTSPTPLNALRSSLVSPSEEIGLSGVRS.

The protein belongs to the ATPase gamma chain family. As to quaternary structure, F-type ATPases have 2 components, CF(1) - the catalytic core - and CF(0) - the membrane proton channel. CF(1) has five subunits: alpha(3), beta(3), gamma(1), delta(1), epsilon(1). CF(0) has three main subunits: a, b and c.

The protein resides in the mitochondrion. The protein localises to the mitochondrion inner membrane. Mitochondrial membrane ATP synthase (F(1)F(0) ATP synthase or Complex V) produces ATP from ADP in the presence of a proton gradient across the membrane which is generated by electron transport complexes of the respiratory chain. F-type ATPases consist of two structural domains, F(1) - containing the extramembraneous catalytic core, and F(0) - containing the membrane proton channel, linked together by a central stalk and a peripheral stalk. During catalysis, ATP synthesis in the catalytic domain of F(1) is coupled via a rotary mechanism of the central stalk subunits to proton translocation. Part of the complex F(1) domain and the central stalk which is part of the complex rotary element. The gamma subunit protrudes into the catalytic domain formed of alpha(3)beta(3). Rotation of the central stalk against the surrounding alpha(3)beta(3) subunits leads to hydrolysis of ATP in three separate catalytic sites on the beta subunits. This is ATP synthase subunit gamma, mitochondrial (ATPC) from Ipomoea batatas (Sweet potato).